Consider the following 226-residue polypeptide: Putative N-acetylmannosamine-6-phosphate 2-epimerase (226 aa).

This sequence belongs to the NanE family.

It catalyses the reaction an N-acyl-D-glucosamine 6-phosphate = an N-acyl-D-mannosamine 6-phosphate. It participates in amino-sugar metabolism; N-acetylneuraminate degradation; D-fructose 6-phosphate from N-acetylneuraminate: step 3/5. In terms of biological role, converts N-acetylmannosamine-6-phosphate (ManNAc-6-P) to N-acetylglucosamine-6-phosphate (GlcNAc-6-P). The chain is Putative N-acetylmannosamine-6-phosphate 2-epimerase from Mycoplasma mycoides subsp. mycoides SC (strain CCUG 32753 / NCTC 10114 / PG1).